We begin with the raw amino-acid sequence, 255 residues long: Small ribosomal subunit protein uS10m (255 aa).

The transit peptide at 1–32 (MALPAARSALSARAFIRPAAALNAAASSSRYL) directs the protein to the mitochondrion. 2 disordered regions span residues 30 to 52 (RYLS…NSET) and 220 to 255 (SEGE…AKSS). Positions 236–255 (DAAREEKPAEKLKEEEAKSS) are enriched in basic and acidic residues.

It belongs to the universal ribosomal protein uS10 family. In terms of assembly, part of the mitochondrial small ribosomal subunit.

The protein localises to the mitochondrion. In terms of biological role, involved in mitochondrial genome encoded proteins translation. Involved in the binding of tRNA to the ribosomes. The polypeptide is Small ribosomal subunit protein uS10m (RSM10) (Cryptococcus neoformans var. neoformans serotype D (strain B-3501A) (Filobasidiella neoformans)).